The sequence spans 345 residues: RNA pseudouridine synthase 1 (345 aa).

Asp-134 is a catalytic residue.

This sequence belongs to the pseudouridine synthase RluA family.

The catalysed reaction is a uridine in RNA = a pseudouridine in RNA. The protein is RNA pseudouridine synthase 1 of Oryza sativa subsp. japonica (Rice).